Consider the following 4128-residue polypeptide: DNA-dependent protein kinase catalytic subunit (4128 aa).

N6-acetyllysine is present on Lys-117. An HEAT 1 repeat occupies Asp-288–Ile-323. Ser-511, Ser-686, Ser-840, and Ser-891 each carry phosphoserine. HEAT repeat units lie at residues Gln-1001–Ser-1037 and Pro-1050–Phe-1086. Ser-1062 carries the phosphoserine modification. At Lys-1206 the chain carries N6-acetyllysine. An interaction with C1D region spans residues Leu-1501–Leu-1536. The leucine-zipper stretch occupies residues Leu-1501–Leu-1536. The stretch at Pro-1720–Pro-1753 is one TPR 1 repeat. Lys-1967 bears the N6-acetyllysine mark. The segment at Tyr-2049–Ser-2071 is disordered. Ser-2053 carries the post-translational modification Phosphoserine; by autocatalysis. Residues Gln-2054 to Asp-2070 are compositionally biased toward basic and acidic residues. Lys-2255 carries the N6-acetyllysine modification. The interval Leu-2432–Glu-3213 is KIP-binding. Thr-2531 bears the Phosphothreonine mark. Thr-2605 carries the post-translational modification Phosphothreonine; by autocatalysis. Phosphoserine; by autocatalysis is present on Ser-2608. A disordered region spans residues Thr-2614 to Gln-2635. Phosphothreonine; by autocatalysis is present on residues Thr-2634 and Thr-2643. A may split the end of the DNA molecule, with the two strands separating around the region region spans residues Glu-2738–Gln-2766. The 633-residue stretch at Pro-2907–Ser-3539 folds into the FAT domain. TPR repeat units follow at residues Val-2921–Thr-2954 and Asn-2956–Val-2983. Ser-3206 carries the post-translational modification Phosphoserine. 4 positions are modified to N6-acetyllysine: Lys-3241, Lys-3260, Lys-3638, and Lys-3642. The PI3K/PI4K catalytic domain occupies Phe-3722 to Gly-4053. Positions Val-3728–Lys-3734 are G-loop. 2 positions are modified to phosphoserine: Ser-3731 and Ser-3821. The catalytic loop stretch occupies residues Gly-3919 to Asn-3927. Residues Gly-3939–Thr-3964 form an activation loop region. Ser-4026 carries the post-translational modification Phosphoserine. The FATC domain maps to Ser-4096 to Met-4128.

Belongs to the PI3/PI4-kinase family. In terms of assembly, DNA-PK is a heterotrimer of PRKDC and the Ku dimer (composed of XRCC6/Ku70 and XRCC5/Ku86). Formation of this complex may be promoted by interaction with ILF3. Component of the core long-range non-homologous end joining (NHEJ) complex (also named DNA-PK complex) composed of PRKDC, LIG4, XRCC4, XRCC6/Ku70, XRCC5/Ku86 and NHEJ1/XLF. Additional component of the NHEJ complex includes PAXX. Following autophosphorylation, PRKDC dissociates from DNA. Interacts with DNA-PKcs-interacting protein (KIP) with the region upstream the kinase domain. PRKDC alone also interacts with and phosphorylates DCLRE1C, thereby activating the latent endonuclease activity of this protein. Interacts with C1D. Interacts with TTI1 and TELO2. Interacts with CIB1. Interacts with SETX. Interacts with NR4A3; the DNA-dependent protein kinase complex DNA-PK phosphorylates and activates NR4A3 and prevents NR4A3 ubiquitination and degradation. Interacts with BRAT1. Part of the HDP-RNP complex composed of at least HEXIM1, PRKDC, XRCC5, XRCC6, paraspeckle proteins (SFPQ, NONO, PSPC1, RBM14, and MATR3) and NEAT1 RNA. Interacts with KAT5. Autophosphorylated at two clusters, the T2609 cluster and the S2056 cluster. Autophosphorylated on Ser-2053, Thr-2605, Thr-2634 and Thr-2643. Ser-2053 and Thr-2605 are DNA damage-inducible phosphorylation sites (inducible with ionizing radiation, IR) dephosphorylated by PPP5C. Autophosphorylation induces a conformational change that leads to remodeling of the DNA-PK complex, requisite for efficient end processing and DNA repair. Autophosphorylation in trans within DNA-PK complexes loaded on DNA ends leads to the dissociation of PRKDC from DNA and the transition into the short-range NHEJ complex. Autophosphorylation of the T2609 cluster is required for hematopoietic development and protein synthesis in erythrocytes precursors. Post-translationally, S-nitrosylated by GAPDH. In terms of processing, polyubiquitinated by RNF144A, leading to proteasomal degradation.

The protein localises to the nucleus. It is found in the nucleolus. The protein resides in the cytoplasm. It localises to the cytosol. The enzyme catalyses L-seryl-[protein] + ATP = O-phospho-L-seryl-[protein] + ADP + H(+). It carries out the reaction L-threonyl-[protein] + ATP = O-phospho-L-threonyl-[protein] + ADP + H(+). Activity seems to be attenuated by autophosphorylation. Binding to the SL1 region of U3 small nucleolar RNA promotes auto-phosphorylation activity. Inhibited by wortmannin. Functionally, serine/threonine-protein kinase that acts as a molecular sensor for DNA damage. Involved in DNA non-homologous end joining (NHEJ) required for double-strand break (DSB) repair and V(D)J recombination. Must be bound to DNA to express its catalytic properties. Promotes processing of hairpin DNA structures in V(D)J recombination by activation of the hairpin endonuclease artemis (DCLRE1C). Recruited by XRCC5 and XRCC6 to DNA ends and is required to (1) protect and align broken ends of DNA, thereby preventing their degradation, (2) and sequester the DSB for repair by NHEJ. Acts as a scaffold protein to aid the localization of DNA repair proteins to the site of damage. The assembly of the DNA-PK complex at DNA ends is also required for the NHEJ ligation step. Found at the ends of chromosomes, suggesting a further role in the maintenance of telomeric stability and the prevention of chromosomal end fusion. Also involved in modulation of transcription. As part of the DNA-PK complex, involved in the early steps of ribosome assembly by promoting the processing of precursor rRNA into mature 18S rRNA in the small-subunit processome. Binding to U3 small nucleolar RNA, recruits PRKDC and XRCC5/Ku86 to the small-subunit processome. Recognizes the substrate consensus sequence [ST]-Q. Phosphorylates 'Ser-139' of histone variant H2AX, thereby regulating DNA damage response mechanism. Phosphorylates ASF1A, DCLRE1C, c-Abl/ABL1, histone H1, HSPCA, c-jun/JUN, p53/TP53, PARP1, POU2F1, DHX9, FH, SRF, NHEJ1/XLF, XRCC1, XRCC4, XRCC5, XRCC6, WRN, MYC and RFA2. Can phosphorylate C1D not only in the presence of linear DNA but also in the presence of supercoiled DNA. Ability to phosphorylate p53/TP53 in the presence of supercoiled DNA is dependent on C1D. Acts as a regulator of the phosphatidylinositol 3-kinase/protein kinase B signal transduction by mediating phosphorylation of 'Ser-473' of protein kinase B (PKB/AKT1, PKB/AKT2, PKB/AKT3), promoting their activation. Contributes to the determination of the circadian period length by antagonizing phosphorylation of CRY1 'Ser-588' and increasing CRY1 protein stability, most likely through an indirect mechanism. Plays a role in the regulation of DNA virus-mediated innate immune response by assembling into the HDP-RNP complex, a complex that serves as a platform for IRF3 phosphorylation and subsequent innate immune response activation through the cGAS-STING pathway. Also regulates the cGAS-STING pathway by catalyzing phosphorylation of CGAS, thereby impairing CGAS oligomerization and activation. Also regulates the cGAS-STING pathway by mediating phosphorylation of PARP1. The polypeptide is DNA-dependent protein kinase catalytic subunit (Prkdc) (Mus musculus (Mouse)).